Reading from the N-terminus, the 581-residue chain is Zinc finger protein 674 (581 aa).

Residues 8–79 (LTFKDVFVDF…DGGTPVRTCA (72 aa)) enclose the KRAB domain. 4 C2H2-type zinc fingers span residues 224–246 (YKCT…QRTH), 252–274 (YECC…QRTH), 280–302 (YECS…QRTH), and 308–330 (FVCD…EKTH). Positions 357–371 (PQCSEHGKASDEKPS) are enriched in basic and acidic residues. The tract at residues 357–377 (PQCSEHGKASDEKPSPTKHWR) is disordered. 7 C2H2-type zinc fingers span residues 385-407 (YECS…QRIH), 413-435 (YECS…HRTH), 441-463 (YECR…QRMH), 469-491 (YKCN…QRIH), 497-519 (YECT…QRIH), 525-547 (YKCS…HRTH), and 553-575 (YECR…QRSH).

The protein belongs to the krueppel C2H2-type zinc-finger protein family. As to expression, expressed in testis.

It is found in the nucleus. In terms of biological role, may be involved in transcriptional regulation. The sequence is that of Zinc finger protein 674 (ZNF674) from Homo sapiens (Human).